Reading from the N-terminus, the 407-residue chain is Phosphopentomutase (407 aa).

The Mn(2+) site is built by D10, D306, H311, D347, H348, and H359.

It belongs to the phosphopentomutase family. Mn(2+) is required as a cofactor.

The protein localises to the cytoplasm. It catalyses the reaction 2-deoxy-alpha-D-ribose 1-phosphate = 2-deoxy-D-ribose 5-phosphate. It carries out the reaction alpha-D-ribose 1-phosphate = D-ribose 5-phosphate. It participates in carbohydrate degradation; 2-deoxy-D-ribose 1-phosphate degradation; D-glyceraldehyde 3-phosphate and acetaldehyde from 2-deoxy-alpha-D-ribose 1-phosphate: step 1/2. Functionally, isomerase that catalyzes the conversion of deoxy-ribose 1-phosphate (dRib-1-P) and ribose 1-phosphate (Rib-1-P) to deoxy-ribose 5-phosphate (dRib-5-P) and ribose 5-phosphate (Rib-5-P), respectively. The protein is Phosphopentomutase of Yersinia pestis bv. Antiqua (strain Antiqua).